The following is a 988-amino-acid chain: Isoleucine--tRNA ligase (988 aa).

The 'HIGH' region motif lies at 60 to 70 (PYANGALHMGH). Residue Glu-570 coordinates L-isoleucyl-5'-AMP. Residues 611–615 (KMSKS) carry the 'KMSKS' region motif. Lys-614 is a binding site for ATP. Zn(2+) contacts are provided by Cys-957, Cys-960, Cys-977, and Cys-980.

This sequence belongs to the class-I aminoacyl-tRNA synthetase family. IleS type 1 subfamily. As to quaternary structure, monomer. Zn(2+) is required as a cofactor.

The protein resides in the cytoplasm. The enzyme catalyses tRNA(Ile) + L-isoleucine + ATP = L-isoleucyl-tRNA(Ile) + AMP + diphosphate. In terms of biological role, catalyzes the attachment of isoleucine to tRNA(Ile). As IleRS can inadvertently accommodate and process structurally similar amino acids such as valine, to avoid such errors it has two additional distinct tRNA(Ile)-dependent editing activities. One activity is designated as 'pretransfer' editing and involves the hydrolysis of activated Val-AMP. The other activity is designated 'posttransfer' editing and involves deacylation of mischarged Val-tRNA(Ile). The protein is Isoleucine--tRNA ligase of Synechocystis sp. (strain ATCC 27184 / PCC 6803 / Kazusa).